Consider the following 205-residue polypeptide: MSINYIATSKLPTPWGVFSMHGFEDTQTGKEHVALTFGEWQPSHAILGRIHSECLTGDALFSLRCDCGFQLQTAMQNIAEAGQGFILYLRQEGRGIGLLNKIRAYELQDAGANTVEANERLGFDADMRKYDMIAPMLEKIAVTQVKLMTNNPRKVKAMQDLGIVVAERVPLQVGKNRYNEAYLKTKSTELGHMMSEHHFNDDKGN.

49-53 (RIHSE) contributes to the GTP binding site. Zn(2+)-binding residues include C54, C65, and C67. GTP is bound by residues Q70, 92–94 (EGR), and T114. D126 functions as the Proton acceptor in the catalytic mechanism. R128 serves as the catalytic Nucleophile. Residues T149 and K154 each coordinate GTP.

The protein belongs to the GTP cyclohydrolase II family. Zn(2+) is required as a cofactor.

It catalyses the reaction GTP + 4 H2O = 2,5-diamino-6-hydroxy-4-(5-phosphoribosylamino)-pyrimidine + formate + 2 phosphate + 3 H(+). The protein operates within cofactor biosynthesis; riboflavin biosynthesis; 5-amino-6-(D-ribitylamino)uracil from GTP: step 1/4. In terms of biological role, catalyzes the conversion of GTP to 2,5-diamino-6-ribosylamino-4(3H)-pyrimidinone 5'-phosphate (DARP), formate and pyrophosphate. The sequence is that of GTP cyclohydrolase-2 from Shewanella denitrificans (strain OS217 / ATCC BAA-1090 / DSM 15013).